A 110-amino-acid polypeptide reads, in one-letter code: Large ribosomal subunit protein uL22 (110 aa).

It belongs to the universal ribosomal protein uL22 family. As to quaternary structure, part of the 50S ribosomal subunit.

Functionally, this protein binds specifically to 23S rRNA; its binding is stimulated by other ribosomal proteins, e.g. L4, L17, and L20. It is important during the early stages of 50S assembly. It makes multiple contacts with different domains of the 23S rRNA in the assembled 50S subunit and ribosome. Its function is as follows. The globular domain of the protein is located near the polypeptide exit tunnel on the outside of the subunit, while an extended beta-hairpin is found that lines the wall of the exit tunnel in the center of the 70S ribosome. This chain is Large ribosomal subunit protein uL22, found in Syntrophotalea carbinolica (strain DSM 2380 / NBRC 103641 / GraBd1) (Pelobacter carbinolicus).